Reading from the N-terminus, the 1138-residue chain is Condensin-2 complex subunit G2 (1138 aa).

A Phosphoserine modification is found at serine 30. The HEAT repeat unit spans residues 459 to 497 (LLPTLRYSLHDNSEKVRVAFVDLLLKIKAVRAAKFWKIC). Threonine 1114 carries the post-translational modification Phosphothreonine.

As to quaternary structure, component of the condensin-2 complex, which contains the SMC2 and SMC4 heterodimer, and 3 non SMC subunits that probably regulate the complex: NCAPH2, NCAPD3 and NCAPG2. Expressed in spleen, lung and testis as well as in hematopoietic cell lines.

The protein resides in the nucleus. Functionally, regulatory subunit of the condensin-2 complex, a complex which establishes mitotic chromosome architecture and is involved in physical rigidity of the chromatid axis. Is required for early embryonic development and is essential for viability and expansion of the inner cell mass (ICM) of the implanting blastocyst. The chain is Condensin-2 complex subunit G2 (Ncapg2) from Mus musculus (Mouse).